The primary structure comprises 79 residues: Succinate dehydrogenase assembly factor 1, mitochondrial (79 aa).

The protein belongs to the complex I LYR family. SDHAF1 subfamily. Interacts with SDH2 within an SDH1-SDH2 subcomplex.

The protein resides in the mitochondrion matrix. In terms of biological role, plays an essential role in the assembly of succinate dehydrogenase (SDH), an enzyme complex (also referred to as respiratory complex II) that is a component of both the tricarboxylic acid (TCA) cycle and the mitochondrial electron transport chain, and which couples the oxidation of succinate to fumarate with the reduction of ubiquinone (coenzyme Q) to ubiquinol. Promotes maturation of the iron-sulfur protein subunit SDH2 of the SDH catalytic dimer, protecting it from the deleterious effects of oxidants. Acts together with SDHAF3 (SDH7). The protein is Succinate dehydrogenase assembly factor 1, mitochondrial of Saccharomyces cerevisiae (strain YJM789) (Baker's yeast).